The sequence spans 285 residues: Zinc transporter ZupT (285 aa).

Helical transmembrane passes span 13 to 33 (AFLL…IAFF), 41 to 61 (FLCV…MIEM), and 80 to 100 (WITV…DKFV). Residues asparagine 153 and glutamate 156 each contribute to the Fe(2+) site. Glutamate 156 provides a ligand contact to Zn(2+). Residues 160–180 (TFVSALEGASLAIPITIAIAI) traverse the membrane as a helical segment. Zn(2+) is bound at residue histidine 181. Positions 182, 185, and 214 each coordinate Fe(2+). Glutamate 185 lines the Zn(2+) pocket. 3 helical membrane-spanning segments follow: residues 204–224 (FLYS…GYTL), 228–248 (IFND…MVFI), and 265–285 (LAIY…LLFI).

It belongs to the ZIP transporter (TC 2.A.5) family. ZupT subfamily.

The protein localises to the cell membrane. The enzyme catalyses Zn(2+)(in) = Zn(2+)(out). Functionally, mediates zinc uptake. May also transport other divalent cations. The sequence is that of Zinc transporter ZupT from Clostridium perfringens (strain 13 / Type A).